Here is a 249-residue protein sequence, read N- to C-terminus: Eukaryotic translation initiation factor 3 subunit K (249 aa).

The 177-residue stretch at 46-222 (FDCYANLALL…VKVPSNKENE (177 aa)) folds into the PCI domain.

The protein belongs to the eIF-3 subunit K family. Component of the eukaryotic translation initiation factor 3 (eIF-3) complex.

It localises to the cytoplasm. Its function is as follows. Component of the eukaryotic translation initiation factor 3 (eIF-3) complex, which is involved in protein synthesis of a specialized repertoire of mRNAs and, together with other initiation factors, stimulates binding of mRNA and methionyl-tRNAi to the 40S ribosome. The eIF-3 complex specifically targets and initiates translation of a subset of mRNAs involved in cell proliferation. The sequence is that of Eukaryotic translation initiation factor 3 subunit K from Aspergillus clavatus (strain ATCC 1007 / CBS 513.65 / DSM 816 / NCTC 3887 / NRRL 1 / QM 1276 / 107).